A 476-amino-acid polypeptide reads, in one-letter code: S-adenosylmethionine-dependent nucleotide dehydratase (476 aa).

Residues methionine 1–isoleucine 168 form a cytidylate kinase-like domain region. Glycine 9–threonine 17 is a binding site for ATP. The region spanning asparagine 176–glutamate 400 is the Radical SAM core domain. The prokaryotic viperin domain stretch occupies residues serine 183–glutamate 476. The [4Fe-4S] cluster site is built by cysteine 192, cysteine 196, and cysteine 199.

It in the N-terminal section; belongs to the cytidylate kinase-like family. This sequence in the C-terminal section; belongs to the radical SAM superfamily. Viperin family. The cofactor is [4Fe-4S] cluster.

It carries out the reaction GTP + AH2 + S-adenosyl-L-methionine = 3'-deoxy-3',4'-didehydro-GTP + 5'-deoxyadenosine + L-methionine + A + H2O + H(+). Expression of pVip60 in E.coli (strain MG1655) confers resistance to phage T7; prevents culture collapse upon infection. Catalyzes the conversion of guanosine triphosphate (GTP) to 3'-deoxy-3',4'-didehydro-GTP (ddhGTP), probably via a SAM-dependent radical mechanism. The modified nucleotide represses transcription from T7 RNA polymerase-directed genes (possibly by acting as chain terminators), strongly suggesting these nucleotides block viral polymerase transcription. Functionally, the N-terminus of the protein may generate NTP for use by the viperin domain. The sequence is that of S-adenosylmethionine-dependent nucleotide dehydratase from Lacinutrix mariniflava (strain JCM 13824 / KCCM 42306 / AKS432).